Consider the following 177-residue polypeptide: Peptide methionine sulfoxide reductase MsrA 2 (177 aa).

Cysteine 12 is an active-site residue.

This sequence belongs to the MsrA Met sulfoxide reductase family.

The enzyme catalyses L-methionyl-[protein] + [thioredoxin]-disulfide + H2O = L-methionyl-(S)-S-oxide-[protein] + [thioredoxin]-dithiol. It carries out the reaction [thioredoxin]-disulfide + L-methionine + H2O = L-methionine (S)-S-oxide + [thioredoxin]-dithiol. Functionally, has an important function as a repair enzyme for proteins that have been inactivated by oxidation. Catalyzes the reversible oxidation-reduction of methionine sulfoxide in proteins to methionine. The chain is Peptide methionine sulfoxide reductase MsrA 2 from Staphylococcus aureus (strain MRSA252).